Here is a 136-residue protein sequence, read N- to C-terminus: Protein NrdI (136 aa).

This sequence belongs to the NrdI family.

Probably involved in ribonucleotide reductase function. The sequence is that of Protein NrdI from Salmonella dublin (strain CT_02021853).